We begin with the raw amino-acid sequence, 328 residues long: Flotillin-like protein FloA (328 aa).

2 helical membrane-spanning segments follow: residues 9-29 and 30-50; these read LLIT…VPVG and LWIS…IGMR.

This sequence belongs to the flotillin-like FloA family. In terms of assembly, homooligomerizes.

It is found in the cell membrane. It localises to the membrane raft. In terms of biological role, found in functional membrane microdomains (FMM) that may be equivalent to eukaryotic membrane rafts. FMMs are highly dynamic and increase in number as cells age. Flotillins are thought to be important factors in membrane fluidity. This Exiguobacterium sp. (strain ATCC BAA-1283 / AT1b) protein is Flotillin-like protein FloA.